We begin with the raw amino-acid sequence, 361 residues long: tRNA-specific 2-thiouridylase MnmA (361 aa).

ATP-binding positions include 11–18 (GMSGGVDS) and M37. The active-site Nucleophile is the C106. The cysteines at positions 106 and 202 are disulfide-linked. An ATP-binding site is contributed by G130. Residues 152–154 (KDQ) form an interaction with tRNA region. The active-site Cysteine persulfide intermediate is C202. Residues 308 to 309 (RY) form an interaction with tRNA region.

It belongs to the MnmA/TRMU family.

Its subcellular location is the cytoplasm. The enzyme catalyses S-sulfanyl-L-cysteinyl-[protein] + uridine(34) in tRNA + AH2 + ATP = 2-thiouridine(34) in tRNA + L-cysteinyl-[protein] + A + AMP + diphosphate + H(+). In terms of biological role, catalyzes the 2-thiolation of uridine at the wobble position (U34) of tRNA, leading to the formation of s(2)U34. The chain is tRNA-specific 2-thiouridylase MnmA from Clostridium botulinum (strain Alaska E43 / Type E3).